The following is a 539-amino-acid chain: Phosphoenolpyruvate carboxykinase (ATP) (539 aa).

Substrate is bound by residues R64, Y206, and K212. Residues K212, H231, and 247–255 (GLSGTGKTT) contribute to the ATP site. Residues K212 and H231 each contribute to the Mn(2+) site. D268 serves as a coordination point for Mn(2+). ATP is bound by residues E296, R332, 448–449 (RI), and T454. R332 contributes to the substrate binding site.

This sequence belongs to the phosphoenolpyruvate carboxykinase (ATP) family. As to quaternary structure, monomer. The cofactor is Mn(2+).

The protein resides in the cytoplasm. The catalysed reaction is oxaloacetate + ATP = phosphoenolpyruvate + ADP + CO2. The protein operates within carbohydrate biosynthesis; gluconeogenesis. In terms of biological role, involved in the gluconeogenesis. Catalyzes the conversion of oxaloacetate (OAA) to phosphoenolpyruvate (PEP) through direct phosphoryl transfer between the nucleoside triphosphate and OAA. This is Phosphoenolpyruvate carboxykinase (ATP) from Salmonella arizonae (strain ATCC BAA-731 / CDC346-86 / RSK2980).